A 484-amino-acid chain; its full sequence is MTRKIMLQGTGSDVGKSVLVAGLCRLASNHGLSVKPFKPQNMSNNAAVADDGGEIGRAQWLQALAARVPSSVHMNPVLLKPQTDVGSQVVVQGRVAGQAKGKEYQALKPSLLGSVMESFEQVSAGADLVIVEGAGSPAEINLRAGDIANMGFATRADVPVVLVGDIDRGGVIASLVGTHAILPGDDRRMVTGYLINKFRGDVTLFDDGIASVRQFTGWPCFGVVPWLKSAGRLPAEDSVVLERLTRGGGKALKVAVPVLSRIANFDDLDPLAAEPDVDIVFVRPGTPLPDDAGLIVIPGSKSTIADLDDFRRQGWDRDLDRHMRRGGRVVGICGGYQMLGSRVADPLGIEGGKREIEGLGLLSVETEMAPEKTVRNSRAWSREYDVALEGYEIHLGKTTGADCSRAPVEIDGRPDGAMSADGRVMGTYLHGLFGSDAYRSALLKSFGIEGGGGNYRRSVDAALDEIALELETVLDRAWLGTLLG.

The region spanning 251 to 438 is the GATase cobBQ-type domain; the sequence is ALKVAVPVLS…LHGLFGSDAY (188 aa). Cys333 (nucleophile) is an active-site residue. His430 is an active-site residue.

The protein belongs to the CobB/CobQ family. CobQ subfamily.

It participates in cofactor biosynthesis; adenosylcobalamin biosynthesis. In terms of biological role, catalyzes amidations at positions B, D, E, and G on adenosylcobyrinic A,C-diamide. NH(2) groups are provided by glutamine, and one molecule of ATP is hydrogenolyzed for each amidation. This is Cobyric acid synthase from Rhizobium meliloti (strain 1021) (Ensifer meliloti).